The following is a 121-amino-acid chain: Mitochondrial intermembrane space cysteine motif-containing protein MIX14 (121 aa).

CHCH domains are found at residues 14–56 and 60–105; these read VANC…VPSV and MSEC…VKNK. 4 consecutive short sequence motifs (cx9C motif) follow at residues 17-27, 38-48, 63-73, and 87-97; these read CPQEFLQYHKC, CKDGRMILSTC, CSEPMKKYDQC, and CLGFLQDLRKC. 4 disulfides stabilise this stretch: cysteine 17/cysteine 48, cysteine 27/cysteine 38, cysteine 63/cysteine 97, and cysteine 73/cysteine 87.

The protein resides in the mitochondrion intermembrane space. This is Mitochondrial intermembrane space cysteine motif-containing protein MIX14 (MIX14) from Saccharomyces cerevisiae (strain ATCC 204508 / S288c) (Baker's yeast).